The sequence spans 347 residues: Hyaluronidase conohyal-ad1 (347 aa).

A signal peptide spans 1-18; that stretch reads MRAVVVVTGLVVVVVTTT. The propeptide occupies 19–33; sequence LSLQDHDVKSASSPL. Positions 27–49 are disordered; that stretch reads KSASSPLSSSVDQGSSGDDCDEG. The span at 28–43 shows a compositional bias: low complexity; the sequence is SASSPLSSSVDQGSSG. A disulfide bond links Cys-67 and Cys-343. The active-site Proton donor is Glu-150.

Belongs to the glycosyl hydrolase 56 family. Contains 4 disulfide bonds. In terms of processing, is N-linked glycosylated at three positions. As to expression, expressed by the venom duct.

It is found in the secreted. It carries out the reaction Random hydrolysis of (1-&gt;4)-linkages between N-acetyl-beta-D-glucosamine and D-glucuronate residues in hyaluronate.. Hyaluronidase catalyzes the hydrolysis of hyaluronic acid (HA), an anionic, nonsulfated glycosaminoglycan distributed widely throughout connective, epithelial, and neural tissues. In venom, they are known to enhance diffusion of the venom by degrading the extracellular matrix. The polypeptide is Hyaluronidase conohyal-ad1 (Conus adamsonii (Rhododendron cone)).